Consider the following 351-residue polypeptide: Ca(2+)/H(+) antiporter ChaA (351 aa).

11 helical membrane passes run 4 to 24, 25 to 45, 59 to 79, 86 to 106, 130 to 150, 156 to 176, 205 to 225, 241 to 261, 282 to 302, 303 to 323, and 331 to 351; these read IFFI…LMHW, PSAV…SYMG, IGGL…SLFA, GIVL…VAGL, GLLI…SVGM, LNLS…ALYF, VATI…ENLV, FIGV…SAII, IAMF…TSMP, LVFT…MIAI, and WFEG…FFLL.

It belongs to the Ca(2+):cation antiporter (CaCA) (TC 2.A.19) family. Cation/proton exchanger (CAX) subfamily. Homotrimer.

The protein resides in the cell membrane. Its activity is regulated as follows. Calcium efflux is tightly regulated by intracellular pH. Its function is as follows. Ca(+)/H(+) antiporter that extrudes calcium in exchange for external protons. Does not transport sodium or potassium. The polypeptide is Ca(2+)/H(+) antiporter ChaA (chaA) (Bacillus subtilis (strain 168)).